The following is a 130-amino-acid chain: MSMQDPISDMITRIRNGQSAKKELISMPYSNLKKSIANLLKEEGFILDYKVEDNKKPTLKLNLKYFKNNPVIEKIKRISRPGLRIYKKRKHLPNVMSGMGIAIVSTSRGIMTDKLARTYNLGGEIICYVE.

It belongs to the universal ribosomal protein uS8 family. Part of the 30S ribosomal subunit. Contacts proteins S5 and S12.

Functionally, one of the primary rRNA binding proteins, it binds directly to 16S rRNA central domain where it helps coordinate assembly of the platform of the 30S subunit. The polypeptide is Small ribosomal subunit protein uS8 (Wigglesworthia glossinidia brevipalpis).